The following is a 663-amino-acid chain: Methionine--tRNA ligase (663 aa).

The 'HIGH' region signature appears at 13 to 23; the sequence is PYTNGPCHLGH. Zn(2+)-binding residues include C144, C147, C156, and C160. The short motif at 326 to 330 is the 'KMSKS' region element; that stretch reads KFSKS. K329 contacts ATP. The region spanning 565-663 is the tRNA-binding domain; the sequence is EFGKMKLIVG…QAVEPGTPIR (99 aa).

This sequence belongs to the class-I aminoacyl-tRNA synthetase family. MetG type 1 subfamily. In terms of assembly, homodimer. Zn(2+) serves as cofactor.

The protein localises to the cytoplasm. The catalysed reaction is tRNA(Met) + L-methionine + ATP = L-methionyl-tRNA(Met) + AMP + diphosphate. Is required not only for elongation of protein synthesis but also for the initiation of all mRNA translation through initiator tRNA(fMet) aminoacylation. This Methanosphaerula palustris (strain ATCC BAA-1556 / DSM 19958 / E1-9c) protein is Methionine--tRNA ligase.